A 157-amino-acid polypeptide reads, in one-letter code: MFANLIAEKLQKLQLSVATAESVTGGLLAHCLTSIDGASNYFNGGVIAYNNQVKINLLNVQSSTIANHGAVSSFCAREMAVGVKQKFQADVGIACSGIAGSKAVENKAIGLLFFCIIIGNKAYDFEFEMNQNNRKDNIELFTNKILESFHYLLTKLA.

This sequence belongs to the CinA family.

The protein is Protein MG115 of Mycoplasma genitalium (strain ATCC 33530 / DSM 19775 / NCTC 10195 / G37) (Mycoplasmoides genitalium).